Consider the following 234-residue polypeptide: Large ribosomal subunit protein uL1 (234 aa).

It belongs to the universal ribosomal protein uL1 family. As to quaternary structure, part of the 50S ribosomal subunit.

Binds directly to 23S rRNA. The L1 stalk is quite mobile in the ribosome, and is involved in E site tRNA release. Its function is as follows. Protein L1 is also a translational repressor protein, it controls the translation of the L11 operon by binding to its mRNA. The chain is Large ribosomal subunit protein uL1 from Aliivibrio salmonicida (strain LFI1238) (Vibrio salmonicida (strain LFI1238)).